Reading from the N-terminus, the 391-residue chain is Pepsin B (391 aa).

Residues 1–16 (MKCLILALICLQLSEG) form the signal peptide. A propeptide spans 17-60 (LVVRQILHKGKSIRERMEENGVLEDFLRYNKKADPAAKFLFNKD) (activation peptide). In terms of domain architecture, Peptidase A1 spans 75–388 (YFGEISIGTP…DMANNRVGFA (314 aa)). Residue D93 is part of the active site. Disulfide bonds link C106–C111 and C270–C274. D279 is an active-site residue. C313 and C346 are oxidised to a cystine.

It belongs to the peptidase A1 family.

It is found in the secreted. The enzyme catalyses Degradation of gelatin, little activity on hemoglobin. Specificity on B chain of insulin more restricted than that of pepsin A. Does not cleave 1-Phe-|-Val-2, 4-Gln-|-His-5 or 23-Gly-|-Phe-24.. Hydrolyzes various peptides including beta-endorphin, insulin B chain, dynorphin A, and neurokinin A, with high specificity for the cleavage of the Phe-Xaa bonds. This is Pepsin B from Monodelphis domestica (Gray short-tailed opossum).